Reading from the N-terminus, the 116-residue chain is Small ribosomal subunit protein bS6 (116 aa).

The segment at 94 to 116 (ESITEPSPLTKPKEDRKGDSEAA) is disordered. Basic and acidic residues predominate over residues 104–116 (KPKEDRKGDSEAA).

The protein belongs to the bacterial ribosomal protein bS6 family.

Binds together with bS18 to 16S ribosomal RNA. This is Small ribosomal subunit protein bS6 from Idiomarina loihiensis (strain ATCC BAA-735 / DSM 15497 / L2-TR).